We begin with the raw amino-acid sequence, 448 residues long: tRNA(Ile)-lysidine synthase (448 aa).

Residue 25–30 (SGGSDS) participates in ATP binding.

This sequence belongs to the tRNA(Ile)-lysidine synthase family.

It localises to the cytoplasm. It carries out the reaction cytidine(34) in tRNA(Ile2) + L-lysine + ATP = lysidine(34) in tRNA(Ile2) + AMP + diphosphate + H(+). Functionally, ligates lysine onto the cytidine present at position 34 of the AUA codon-specific tRNA(Ile) that contains the anticodon CAU, in an ATP-dependent manner. Cytidine is converted to lysidine, thus changing the amino acid specificity of the tRNA from methionine to isoleucine. The chain is tRNA(Ile)-lysidine synthase from Brucella suis biovar 1 (strain 1330).